Reading from the N-terminus, the 621-residue chain is 1-deoxy-D-xylulose-5-phosphate synthase (621 aa).

Residues H80 and 121–123 (GHS) contribute to the thiamine diphosphate site. Residue D152 coordinates Mg(2+). Thiamine diphosphate contacts are provided by residues 153–154 (GA), N181, Y288, and E370. Mg(2+) is bound at residue N181.

It belongs to the transketolase family. DXPS subfamily. As to quaternary structure, homodimer. Requires Mg(2+) as cofactor. Thiamine diphosphate is required as a cofactor.

It catalyses the reaction D-glyceraldehyde 3-phosphate + pyruvate + H(+) = 1-deoxy-D-xylulose 5-phosphate + CO2. The protein operates within metabolic intermediate biosynthesis; 1-deoxy-D-xylulose 5-phosphate biosynthesis; 1-deoxy-D-xylulose 5-phosphate from D-glyceraldehyde 3-phosphate and pyruvate: step 1/1. Catalyzes the acyloin condensation reaction between C atoms 2 and 3 of pyruvate and glyceraldehyde 3-phosphate to yield 1-deoxy-D-xylulose-5-phosphate (DXP). The polypeptide is 1-deoxy-D-xylulose-5-phosphate synthase (Vibrio vulnificus (strain CMCP6)).